Here is a 101-residue protein sequence, read N- to C-terminus: Urease subunit beta (101 aa).

Belongs to the urease beta subunit family. Heterotrimer of UreA (gamma), UreB (beta) and UreC (alpha) subunits. Three heterotrimers associate to form the active enzyme.

It localises to the cytoplasm. The enzyme catalyses urea + 2 H2O + H(+) = hydrogencarbonate + 2 NH4(+). It participates in nitrogen metabolism; urea degradation; CO(2) and NH(3) from urea (urease route): step 1/1. The protein is Urease subunit beta of Burkholderia mallei (strain NCTC 10247).